A 176-amino-acid chain; its full sequence is MQSSKNKINGPINLVRIEGVIDGINKVVYLFMDYHADINEQTNCEDQNNSINISKYLLDNLTTSNDNNVVYDFFLEILPSDIFTNFNTTIFSILKDNELEYLASVKKLFLQNVDNSNNKITSKLKNVRLHYIDIRDKMYLLMYDPIRFAISSINQLQKNPDDKLLDIMHIKLLVDV.

Belongs to the mimivirus R160 family.

This is an uncharacterized protein from Acanthamoeba polyphaga mimivirus (APMV).